Here is a 302-residue protein sequence, read N- to C-terminus: 4-diphosphocytidyl-2-C-methyl-D-erythritol kinase (302 aa).

K27 is an active-site residue. An ATP-binding site is contributed by P110–S120. Residue D152 is part of the active site.

It belongs to the GHMP kinase family. IspE subfamily.

The catalysed reaction is 4-CDP-2-C-methyl-D-erythritol + ATP = 4-CDP-2-C-methyl-D-erythritol 2-phosphate + ADP + H(+). It functions in the pathway isoprenoid biosynthesis; isopentenyl diphosphate biosynthesis via DXP pathway; isopentenyl diphosphate from 1-deoxy-D-xylulose 5-phosphate: step 3/6. Its function is as follows. Catalyzes the phosphorylation of the position 2 hydroxy group of 4-diphosphocytidyl-2C-methyl-D-erythritol. In Mannheimia succiniciproducens (strain KCTC 0769BP / MBEL55E), this protein is 4-diphosphocytidyl-2-C-methyl-D-erythritol kinase.